Consider the following 847-residue polypeptide: MMRVHTHTRLCFLCVLTLLYHQCSHCHEGGSHHHHGHNHGDHDHIHSDLQISEMSCNGLSDRLVHGSQGEPAENEQRYYIHQLFCRYGQKDRLDFKGFQSLLLSLGLGEVRVVGLEHEDLGHDHVAHLDILEVQDGRHSHSAGHPHSHQNPNISHKTHQHSHHENEEHTLAEDVPCSKTLGTGATPPSVSEEHDHDHEHDHDHDKDSDHEHNHRHVTDSPQTQDHEHDHIHLHTHSHKQDSDVTQRLELDHDQKSREHAQEHNDLSDQNHHHHDHHHHKHPHPHLHAPESVVHTTSAMPKIQPSVPPELPANQTRRHRRPSKVKAHRGRNRTSVTVTQAVELETSGDDHEHSLQDHSPAQQQRGRREVPGSPAHGVLHQHEECLNLTQLLHQYGLSSDSLISPVQFTYLCPALLYQIDRRFCILHYHHVEAEEQVAPSSGWVWMWGFVSITIISLLSLLGVVLVPILNQSCFKFLLTFLVALAVGTLSGDALLHLLPHSQGDHDHNHGEQMEEEPEVDFLIKFDGVWKGLTALAGIYLLFIIEHCIGMFKHYSDQRGGLCHKKKKGEQAKIGRKLSDHKLNRRSDAEWLHLKPLTEGDGTTCEAGHNDTQMTELQPLDSPSKMPLNISDSDHPYEAPVKTEEDNVPKAKSKKHGHGHGHGHGHGHGHSHHGHCHSDQEMKDAGIASIAWMVIMGDGMHNFSDGLAIGAAFSANITGGISTSVAVFCHELPHELGDFAVLLKAGMSVKQAIVYNLLSALMAYAGMVIGTAVGQYTHNVTSWIFAVTAGMFLYVALVDMLPEMLHGDSEEHKRCEMGHFVLQNFGMLTGFGIMLLIAIFEDHIVLDFGF.

The N-terminal stretch at 1–26 (MMRVHTHTRLCFLCVLTLLYHQCSHC) is a signal peptide. Positions 136–374 (GRHSHSAGHP…RREVPGSPAH (239 aa)) are disordered. Residues 162–171 (HHENEEHTLA) are compositionally biased toward basic and acidic residues. Over residues 179 to 188 (TLGTGATPPS) the composition is skewed to polar residues. Residues 190-269 (SEEHDHDHEH…QEHNDLSDQN (80 aa)) are compositionally biased toward basic and acidic residues. Composition is skewed to basic residues over residues 270–285 (HHHHDHHHHKHPHPHL) and 314–330 (TRRHRRPSKVKAHRGRN). Residue Asn-385 is glycosylated (N-linked (GlcNAc...) asparagine). The next 3 helical transmembrane spans lie at 447 to 467 (FVSITIISLLSLLGVVLVPIL), 474 to 494 (FLLTFLVALAVGTLSGDALLH), and 529 to 549 (GLTALAGIYLLFIIEHCIGMF). The tract at residues 613-676 (ELQPLDSPSK…HSHHGHCHSD (64 aa)) is disordered. Basic and acidic residues predominate over residues 629 to 646 (DSDHPYEAPVKTEEDNVP). A compositionally biased stretch (basic residues) spans 648 to 672 (AKSKKHGHGHGHGHGHGHGHSHHGH). 4 consecutive transmembrane segments (helical) span residues 705-725 (AIGAAFSANITGGISTSVAVF), 750-770 (IVYNLLSALMAYAGMVIGTAV), 779-799 (SWIFAVTAGMFLYVALVDMLP), and 817-837 (FVLQNFGMLTGFGIMLLIAIF).

Belongs to the ZIP transporter (TC 2.A.5) family. In terms of processing, undergoes N-terminal ectodomain shedding.

Its subcellular location is the cell membrane. The protein resides in the apical cell membrane. It catalyses the reaction Zn(2+)(in) = Zn(2+)(out). In terms of biological role, zinc-influx transporter. When associated with slc39a6, the heterodimer slc39a10/slc39a6 has a functional role in epithelial-mesenchymal transition (EMT) during embryonic development. Slc39a10/slc39a6 heterodimers play also an essentiel role in initiating mitosis by importing zinc into cells to initiate a pathway resulting in the onset of mitosis. When associated with slc39a6, the heterodimer controls Ncam1 phosphorylation and integration into focal adhesion complexes during EMT. The chain is Zinc transporter ZIP10 from Danio rerio (Zebrafish).